Consider the following 615-residue polypeptide: Filament-like plant protein 3 (615 aa).

Basic and acidic residues predominate over residues M1 to G18. Residues M1–A55 are disordered. Over residues E19–S28 the composition is skewed to polar residues. The span at H29 to R38 shows a compositional bias: basic and acidic residues. Positions S39–P48 are enriched in polar residues. 2 coiled-coil regions span residues A87–R121 and E148–E211. Disordered regions lie at residues D258 to E289 and P319 to Q343. The span at D262–S288 shows a compositional bias: polar residues. Positions E322 to Q343 are enriched in basic and acidic residues. Positions H327–T563 form a coiled coil.

It belongs to the FPP family. In terms of assembly, interacts with WPP/MAF proteins. Binds to COG2; this interaction promotes the association between cortical microtubules and EXO70A1. As to expression, accumulates in preferentially xylem cells.

The protein resides in the vesicle. Its function is as follows. Ensures, when in complex with COG2 and FPP2/VETH2, the correct secondary cell wall (SCW) deposition pattern by recruiting exocyst components to cortical microtubules in xylem cells during secondary cell wall deposition by recruiting EXO70A1. This Arabidopsis thaliana (Mouse-ear cress) protein is Filament-like plant protein 3.